We begin with the raw amino-acid sequence, 515 residues long: Bifunctional purine biosynthesis protein PurH (515 aa).

An MGS-like domain is found at 1–145 (MTKRALISVS…KNHASVTVVV (145 aa)).

The protein belongs to the PurH family.

It catalyses the reaction (6R)-10-formyltetrahydrofolate + 5-amino-1-(5-phospho-beta-D-ribosyl)imidazole-4-carboxamide = 5-formamido-1-(5-phospho-D-ribosyl)imidazole-4-carboxamide + (6S)-5,6,7,8-tetrahydrofolate. It carries out the reaction IMP + H2O = 5-formamido-1-(5-phospho-D-ribosyl)imidazole-4-carboxamide. The protein operates within purine metabolism; IMP biosynthesis via de novo pathway; 5-formamido-1-(5-phospho-D-ribosyl)imidazole-4-carboxamide from 5-amino-1-(5-phospho-D-ribosyl)imidazole-4-carboxamide (10-formyl THF route): step 1/1. It participates in purine metabolism; IMP biosynthesis via de novo pathway; IMP from 5-formamido-1-(5-phospho-D-ribosyl)imidazole-4-carboxamide: step 1/1. In Streptococcus gordonii (strain Challis / ATCC 35105 / BCRC 15272 / CH1 / DL1 / V288), this protein is Bifunctional purine biosynthesis protein PurH.